Reading from the N-terminus, the 228-residue chain is 2,3-bisphosphoglycerate-dependent phosphoglycerate mutase (228 aa).

Substrate contacts are provided by residues 8 to 15 (RHGQSQWN), 21 to 22 (TG), Arg60, 87 to 90 (ERHY), Lys98, 114 to 115 (RR), and 180 to 181 (GN). The active-site Tele-phosphohistidine intermediate is His9. Glu87 functions as the Proton donor/acceptor in the catalytic mechanism.

The protein belongs to the phosphoglycerate mutase family. BPG-dependent PGAM subfamily. In terms of assembly, homodimer.

It carries out the reaction (2R)-2-phosphoglycerate = (2R)-3-phosphoglycerate. The protein operates within carbohydrate degradation; glycolysis; pyruvate from D-glyceraldehyde 3-phosphate: step 3/5. In terms of biological role, catalyzes the interconversion of 2-phosphoglycerate and 3-phosphoglycerate. This is 2,3-bisphosphoglycerate-dependent phosphoglycerate mutase from Novosphingobium aromaticivorans (strain ATCC 700278 / DSM 12444 / CCUG 56034 / CIP 105152 / NBRC 16084 / F199).